A 399-amino-acid polypeptide reads, in one-letter code: Cytohesin-3 (399 aa).

A coiled-coil region spans residues 14 to 61 (EDLSLEEREELLDIRRRKKELIDDIERLKYEIAEVMTEIDNLTSVEES). In terms of domain architecture, SEC7 spans 77-206 (FNMDPKKGIQ…IIMLNTSLHN (130 aa)). The PH domain maps to 264 to 380 (NPDREGWLLK…WMKSIKASIS (117 aa)). A 1,2-diacyl-sn-glycero-3-phospho-(1D-myo-inositol-3,4,5-trisphosphate)-binding positions include 273-280 (KLGGRVKT), Arg284, Tyr295, Arg305, and Asn354. Positions 391 to 399 (RKRRIANKK) are C-terminal autoinhibitory region.

In terms of assembly, interacts with TAMALIN. Interacts with FRMD4A. Interacts with FRMD4B.

It localises to the cytoplasm. The protein localises to the cytosol. The protein resides in the cell membrane. Its subcellular location is the cell junction. It is found in the adherens junction. It localises to the tight junction. Its function is as follows. Promotes guanine-nucleotide exchange on ARF1. Promotes the activation of ARF factors through replacement of GDP with GTP. Plays a role in the epithelial polarization. In Mus musculus (Mouse), this protein is Cytohesin-3 (Cyth3).